A 119-amino-acid chain; its full sequence is uncharacterized protein (119 aa).

This is an uncharacterized protein from Schizosaccharomyces pombe (strain 972 / ATCC 24843) (Fission yeast).